We begin with the raw amino-acid sequence, 258 residues long: Calcium release-activated calcium channel protein 1 (258 aa).

Residues 1–63 (MYPECGVETK…SRAKLKASSR (63 aa)) are Cytoplasmic-facing. A helical membrane pass occupies residues 64-81 (TSALLSGFAMVAMVEVQL). Residues 82–91 (EPNHAYPPGL) are Extracellular-facing. A helical membrane pass occupies residues 92 to 112 (LIAFSACTTVLVAVHLFALMV). The Cytoplasmic segment spans residues 113–145 (STCILPNIEAVSNVHNLNSVKESPHERMHHHIE). Residues 146–166 (LAWAFSTVIGTLLFLAEVVLL) form a helical membrane-spanning segment. Residues 167–192 (CWVKFLPVNSPKISSNETSAVSSGQA) lie on the Extracellular side of the membrane. A glycan (N-linked (GlcNAc...) asparagine) is linked at Asn-182. Residues 193-213 (AAITSTAIMVPFGLVFIVFAV) traverse the membrane as a helical segment. The Cytoplasmic segment spans residues 214-258 (HFYRSLVSHKTDRQFQELNELAELAQLQDQLDHRGDPVQSPVHYA).

This sequence belongs to the Orai family.

It localises to the cell membrane. Ca(2+) release-activated Ca(2+) (CRAC) channel subunit which mediates Ca(2+) influx following depletion of intracellular Ca(2+) stores. The sequence is that of Calcium release-activated calcium channel protein 1 (orai1) from Xenopus laevis (African clawed frog).